A 398-amino-acid chain; its full sequence is MQKRLTLLGSTGSIGDSTLDVVARHPERFAVHALTAHRNGEKLVAQCLRFAPDVAVVGDAETAARVEAQLRAAGSRTQVAYGKQALVDVSKSDGCDTVVAAIVGAAGLAPSLAAARAGKRILLANKEALVMSGAIFMDAVRDHGAILLPVDSEHNAIFQCMPRDAAEHGGIAKIIVTASGGPFRTREPATLASVTPDEACKHPNWVMGRKISVDSATMMNKGLEVIEAHWLFGLPSERIDVLIHPQSVIHSLVSYRDGSVLAQLGNPDMRTPIAHALAFPERVDAGVAQLDLAQIATLTFEKPDYARFPCLALAIDALEAGGVASAALNAANEIAVDAFLSRRIRFTAIAQTVGAVLDGLSNRTPGGLDDVIEADAAARRAATAFIGKLPAPGVERAA.

7 residues coordinate NADPH: Thr11, Gly12, Ser13, Ile14, Arg38, Asn39, and Asn125. A 1-deoxy-D-xylulose 5-phosphate-binding site is contributed by Lys126. Residue Glu127 coordinates NADPH. Residue Asp151 coordinates Mn(2+). 1-deoxy-D-xylulose 5-phosphate is bound by residues Ser152, Glu153, Ser179, and His202. Glu153 provides a ligand contact to Mn(2+). Residue Gly208 coordinates NADPH. 4 residues coordinate 1-deoxy-D-xylulose 5-phosphate: Ser215, Asn220, Lys221, and Glu224. Glu224 provides a ligand contact to Mn(2+).

Belongs to the DXR family. Mg(2+) serves as cofactor. Mn(2+) is required as a cofactor.

It catalyses the reaction 2-C-methyl-D-erythritol 4-phosphate + NADP(+) = 1-deoxy-D-xylulose 5-phosphate + NADPH + H(+). Its pathway is isoprenoid biosynthesis; isopentenyl diphosphate biosynthesis via DXP pathway; isopentenyl diphosphate from 1-deoxy-D-xylulose 5-phosphate: step 1/6. Catalyzes the NADPH-dependent rearrangement and reduction of 1-deoxy-D-xylulose-5-phosphate (DXP) to 2-C-methyl-D-erythritol 4-phosphate (MEP). This is 1-deoxy-D-xylulose 5-phosphate reductoisomerase from Burkholderia pseudomallei (strain 1106a).